The chain runs to 345 residues: Protein RecA (345 aa).

Gly-65–Thr-72 is a binding site for ATP.

The protein belongs to the RecA family.

It is found in the cytoplasm. Can catalyze the hydrolysis of ATP in the presence of single-stranded DNA, the ATP-dependent uptake of single-stranded DNA by duplex DNA, and the ATP-dependent hybridization of homologous single-stranded DNAs. It interacts with LexA causing its activation and leading to its autocatalytic cleavage. This chain is Protein RecA, found in Campylobacter fetus subsp. fetus (strain 82-40).